The primary structure comprises 67 residues: Surface composition regulator (67 aa).

This sequence belongs to the GlgS family.

Functionally, major determinant of cell surface composition. Negatively regulates motility, adhesion and synthesis of biofilm exopolysaccharides. This is Surface composition regulator from Salmonella paratyphi A (strain ATCC 9150 / SARB42).